The following is a 479-amino-acid chain: PTS system sucrose-specific EIIBC component (479 aa).

The region spanning 4–87 (PAVAKELLTL…AKLTGMSEMS (84 aa)) is the PTS EIIB type-1 domain. Cys26 (phosphocysteine intermediate; for EIIB activity) is an active-site residue. 11 helical membrane passes run 112–132 (IFVP…IYNL), 158–178 (MINT…AFSA), 182–202 (FGGN…PDLL), 204–224 (GWGF…ILGF), 232–252 (QGSV…ELGL), 264–284 (LTPL…VGPF), 303–323 (AGFV…ITGM), 345–365 (FIFP…LAVG), 376–396 (IAIP…MFGV), 403–423 (PFIA…MFNV), and 448–468 (IAGM…LGIG). Residues 120-477 (IVAGGLLMGI…GDRAKVGKKA (358 aa)) enclose the PTS EIIC type-1 domain.

The protein localises to the cell inner membrane. The enzyme catalyses N(pros)-phospho-L-histidyl-[protein](out) + sucrose = sucrose 6(G)-phosphate(in) + L-histidyl-[protein]. In terms of biological role, the phosphoenolpyruvate-dependent sugar phosphotransferase system (sugar PTS), a major carbohydrate active transport system, catalyzes the phosphorylation of incoming sugar substrates concomitantly with their translocation across the cell membrane. This system is involved in sucrose transport. The sequence is that of PTS system sucrose-specific EIIBC component from Vibrio alginolyticus.